A 165-amino-acid chain; its full sequence is Nucleotide-binding protein P9215_05621 (165 aa).

It belongs to the YajQ family.

In terms of biological role, nucleotide-binding protein. The chain is Nucleotide-binding protein P9215_05621 from Prochlorococcus marinus (strain MIT 9215).